The following is a 154-amino-acid chain: Large ribosomal subunit protein uL13 (154 aa).

Residues 132–154 (PHEAQQPETLDVGAMNRKNKRAA) are disordered.

It belongs to the universal ribosomal protein uL13 family. Part of the 50S ribosomal subunit.

Functionally, this protein is one of the early assembly proteins of the 50S ribosomal subunit, although it is not seen to bind rRNA by itself. It is important during the early stages of 50S assembly. The polypeptide is Large ribosomal subunit protein uL13 (Rhodopseudomonas palustris (strain HaA2)).